Consider the following 121-residue polypeptide: ATP synthase epsilon chain (121 aa).

The protein belongs to the ATPase epsilon chain family. F-type ATPases have 2 components, CF(1) - the catalytic core - and CF(0) - the membrane proton channel. CF(1) has five subunits: alpha(3), beta(3), gamma(1), delta(1), epsilon(1). CF(0) has three main subunits: a, b and c.

The protein resides in the cell membrane. In terms of biological role, produces ATP from ADP in the presence of a proton gradient across the membrane. This is ATP synthase epsilon chain from Mycobacterium marinum (strain ATCC BAA-535 / M).